Consider the following 363-residue polypeptide: Chorismate synthase (363 aa).

NADP(+) contacts are provided by arginine 48 and arginine 54. Residues 125–127 (RSS), 238–239 (NA), glycine 278, 293–297 (KPTSS), and arginine 319 contribute to the FMN site.

The protein belongs to the chorismate synthase family. In terms of assembly, homotetramer. FMNH2 is required as a cofactor.

It catalyses the reaction 5-O-(1-carboxyvinyl)-3-phosphoshikimate = chorismate + phosphate. It functions in the pathway metabolic intermediate biosynthesis; chorismate biosynthesis; chorismate from D-erythrose 4-phosphate and phosphoenolpyruvate: step 7/7. Its function is as follows. Catalyzes the anti-1,4-elimination of the C-3 phosphate and the C-6 proR hydrogen from 5-enolpyruvylshikimate-3-phosphate (EPSP) to yield chorismate, which is the branch point compound that serves as the starting substrate for the three terminal pathways of aromatic amino acid biosynthesis. This reaction introduces a second double bond into the aromatic ring system. This is Chorismate synthase from Alcanivorax borkumensis (strain ATCC 700651 / DSM 11573 / NCIMB 13689 / SK2).